A 583-amino-acid polypeptide reads, in one-letter code: Isocitrate dehydrogenase kinase/phosphatase (583 aa).

ATP contacts are provided by residues 315-321 and Lys-336; that span reads APGIRGM. The active site involves Asp-371.

The protein belongs to the AceK family.

Its subcellular location is the cytoplasm. The catalysed reaction is L-seryl-[isocitrate dehydrogenase] + ATP = O-phospho-L-seryl-[isocitrate dehydrogenase] + ADP + H(+). Bifunctional enzyme which can phosphorylate or dephosphorylate isocitrate dehydrogenase (IDH) on a specific serine residue. This is a regulatory mechanism which enables bacteria to bypass the Krebs cycle via the glyoxylate shunt in response to the source of carbon. When bacteria are grown on glucose, IDH is fully active and unphosphorylated, but when grown on acetate or ethanol, the activity of IDH declines drastically concomitant with its phosphorylation. The sequence is that of Isocitrate dehydrogenase kinase/phosphatase from Salmonella dublin (strain CT_02021853).